The following is a 308-amino-acid chain: Ribosomal RNA large subunit methyltransferase F (308 aa).

Belongs to the methyltransferase superfamily. METTL16/RlmF family.

Its subcellular location is the cytoplasm. It carries out the reaction adenosine(1618) in 23S rRNA + S-adenosyl-L-methionine = N(6)-methyladenosine(1618) in 23S rRNA + S-adenosyl-L-homocysteine + H(+). Specifically methylates the adenine in position 1618 of 23S rRNA. The protein is Ribosomal RNA large subunit methyltransferase F of Salmonella agona (strain SL483).